The following is a 208-amino-acid chain: 3-demethoxyubiquinol 3-hydroxylase (208 aa).

Fe cation-binding residues include Glu57, Glu87, His90, Glu139, Glu171, and His174.

Belongs to the COQ7 family. Fe cation is required as a cofactor.

The protein resides in the cell membrane. The catalysed reaction is a 5-methoxy-2-methyl-3-(all-trans-polyprenyl)benzene-1,4-diol + AH2 + O2 = a 3-demethylubiquinol + A + H2O. Its pathway is cofactor biosynthesis; ubiquinone biosynthesis. Catalyzes the hydroxylation of 2-nonaprenyl-3-methyl-6-methoxy-1,4-benzoquinol during ubiquinone biosynthesis. The sequence is that of 3-demethoxyubiquinol 3-hydroxylase from Burkholderia pseudomallei (strain 668).